Consider the following 155-residue polypeptide: Fibroblast growth factor 1 (155 aa).

Residue Ala2 is modified to N-acetylalanine. The propeptide occupies 2 to 15 (AEGEITTFSALTER). Asn33 is a binding site for heparin. The heparin-binding stretch occupies residues 127–143 (KKNGSCKRGPRTHYGQK).

The protein belongs to the heparin-binding growth factors family. As to quaternary structure, monomer. Homodimer. Interacts with FGFR1, FGFR2, FGFR3 and FGFR4. Affinity between fibroblast growth factors (FGFs) and their receptors is increased by heparan sulfate glycosaminoglycans that function as coreceptors. Found in a complex with FGFBP1, FGF1 and FGF2. Interacts with FGFBP1. Part of a Cu(2+)-dependent multiprotein aggregate containing FGF1, S100A13 and SYT1. Interacts with SYT1. Interacts with S100A13. Interacts with LRRC59. Interacts with CSNKA, CSNKB and FIBP. While binding with LRRC59, CSNKA and FIBP seem mutually exclusive, CSNKB and FIBP may cooperatively interact with FGF1. Forms a ternary complex with FGFR1 and ITGAV:ITGB3 and induces the recruitment of PTPN11 to the complex. In terms of processing, in the nucleus, phosphorylated by PKC/PRKCD.

The protein localises to the secreted. The protein resides in the cytoplasm. It localises to the cell cortex. It is found in the cytosol. Its subcellular location is the nucleus. Plays an important role in the regulation of cell survival, cell division, angiogenesis, cell differentiation and cell migration. Functions as a potent mitogen in vitro. Acts as a ligand for FGFR1 and integrins. Binds to FGFR1 in the presence of heparin leading to FGFR1 dimerization and activation via sequential autophosphorylation on tyrosine residues which act as docking sites for interacting proteins, leading to the activation of several signaling cascades. Binds to integrin ITGAV:ITGB3. Its binding to integrin, subsequent ternary complex formation with integrin and FGFR1, and the recruitment of PTPN11 to the complex are essential for FGF1 signaling. Induces the phosphorylation and activation of FGFR1, FRS2, MAPK3/ERK1, MAPK1/ERK2 and AKT1. Can induce angiogenesis. The polypeptide is Fibroblast growth factor 1 (FGF1) (Mesocricetus auratus (Golden hamster)).